A 403-amino-acid chain; its full sequence is Eukaryotic initiation factor 4A (403 aa).

The disordered stretch occupies residues Met-1 to Val-20. Residues Asp-30–Gln-58 carry the Q motif motif. One can recognise a Helicase ATP-binding domain in the interval Ile-61–Ile-231. An ATP-binding site is contributed by Ala-74 to Thr-81. The DEAD box signature appears at Asp-179–Asp-182. In terms of domain architecture, Helicase C-terminal spans Gly-242–Ile-403.

The protein belongs to the DEAD box helicase family. eIF4A subfamily. In terms of assembly, eIF4F is a multi-subunit complex, the composition of which varies with external and internal environmental conditions. It is composed of at least eIF4A, eIF4E1 and eIF4G1. Interacts with tud and vas. Interacts (via multiple contacts) with bam; the interaction is direct.

The protein localises to the cytoplasm. It is found in the cytoplasmic ribonucleoprotein granule. The catalysed reaction is ATP + H2O = ADP + phosphate + H(+). In terms of biological role, ATP-dependent RNA helicase which is a subunit of the eIF4F complex involved in cap recognition and is required for mRNA binding to ribosome. In the current model of translation initiation, eIF4A unwinds RNA secondary structures in the 5'-UTR of mRNAs which is necessary to allow efficient binding of the small ribosomal subunit, and subsequent scanning for the initiator codon. As a result, promotes cell proliferation and growth. Binds and antagonises the bam-bgcn complex; probably prevents bam mediated translational repression of shg/E-cadherin. Involved in germ cell formation. Involved in germline stem cell maintenance and proliferation; prevents differentiation. In Drosophila melanogaster (Fruit fly), this protein is Eukaryotic initiation factor 4A.